The primary structure comprises 652 residues: Set1 complex component ash2 (652 aa).

Positions 1 to 32 (MLAHGSNDYGVSLKGNKTGSSPSKASSLNWNE) are disordered. A compositionally biased stretch (polar residues) spans 15 to 32 (GNKTGSSPSKASSLNWNE). A PHD-type zinc finger spans residues 40–94 (NTYCYCGKDRNLRFPDLQCSVCLNMFHLSCLSPPCTSMMGFSTNYQFVCKHCTED). Zn(2+)-binding residues include cysteine 43, cysteine 45, cysteine 58, cysteine 61, histidine 66, cysteine 69, cysteine 88, and cysteine 91. The interval 234–270 (RLVETETPPPSSSKLKEDYKDSKREMKRSNTPWSNAS) is disordered. Basic and acidic residues predominate over residues 247–261 (KLKEDYKDSKREMKR). In terms of domain architecture, B30.2/SPRY spans 330–519 (EAAKDLPNVM…KHNRYIDLPY (190 aa)).

The protein belongs to the cclA family. As to quaternary structure, component of the Set1 complex composed of ash2, sdc1, set1, shg1, spp1, swd1, swd2 and swd3. Component of the Lid2 complex composed of ash2, jmj3, lid2, sdc1 and snt2.

Its subcellular location is the nucleus. Component of the COMPASS (Set1C) complex that specifically mono-, di- and trimethylates histone H3 to form H3K4me1/2/3, which subsequently plays a role in telomere length maintenance and transcription elongation regulation. Regulates MAPK pathway and sporulation through H3K4 methylation. The sequence is that of Set1 complex component ash2 from Schizosaccharomyces pombe (strain 972 / ATCC 24843) (Fission yeast).